We begin with the raw amino-acid sequence, 344 residues long: Adenine deaminase (344 aa).

The Zn(2+) site is built by histidine 24, histidine 26, and histidine 204. Residue glutamate 207 is the Proton donor of the active site. Residue aspartate 285 coordinates Zn(2+). Aspartate 286 is a substrate binding site.

The protein belongs to the metallo-dependent hydrolases superfamily. Adenosine and AMP deaminases family. Adenine deaminase type 2 subfamily. Requires Zn(2+) as cofactor.

It catalyses the reaction adenine + H2O + H(+) = hypoxanthine + NH4(+). Catalyzes the hydrolytic deamination of adenine to hypoxanthine. Plays an important role in the purine salvage pathway and in nitrogen catabolism. This Caulobacter vibrioides (strain ATCC 19089 / CIP 103742 / CB 15) (Caulobacter crescentus) protein is Adenine deaminase.